Consider the following 998-residue polypeptide: RNA-directed RNA polymerase (998 aa).

Interaction with host mitochondria outer membrane regions lie at residues 1 to 67 and 233 to 250; these read MTLK…DKTK and VRTS…RMIG. A homomultimerization region spans residues 1 to 400; sequence MTLKVILGEH…KPTMPRVHWP (400 aa). Residues 17–34 traverse the membrane as a helical segment; the sequence is LLVGIATVSGCGAVVYCI. The interval 35-998 is cytoplasmic; the sequence is SKFWGYGAIA…AQPQPSNNRK (964 aa). A capping region spans residues 91 to 282; it reads NGHAVSGAVR…LVYTIPQYVI (192 aa). The For RdRp/TNTase activity role is filled by Asp692. A homomultimerization region spans residues 700-800; sequence IQKSINRAAK…MVLRLYGPTA (101 aa). The tract at residues 901-998 is disordered; that stretch reads AKQTRANPGT…AQPQPSNNRK (98 aa). 2 stretches are compositionally biased toward polar residues: residues 904-913 and 947-961; these read TRANPGTSRP and GKTN…TAGE. The span at 971–984 shows a compositional bias: basic residues; that stretch reads KGPRGGKTNTRRTP.

It belongs to the nodaviridae RNA polymerase family. Homododecamer. Forms 2 stacked rings of 35-nm in diameter, arranged in a crown-like structure at the opening of virus-induced replication vesicles. Interacts with protein B2. It depends on Mn(2+) as a cofactor.

It localises to the host mitochondrion outer membrane. The catalysed reaction is RNA(n) + a ribonucleoside 5'-triphosphate = RNA(n+1) + diphosphate. With respect to regulation, drastically inhibited by phosphonoacetic acid. Only slightly inhibited by gliotoxin. Functionally, RNA-dependent RNA polymerase, which replicates the viral genome composed of 2 RNA segments, RNA1 and RNA2. Does not need an exogenous primer. Also possesses a terminal nucleotidyl transferase (TNTase) activity. The TNTase catalyzes the addition of nucleotide to the 3'-end of plus- and minus-stranded RNAs, probably to repair the 3'-end nucleotide loss. Forms the open necked connection to the cytosol of the virus-induced replication vesicles. Mediates viral RNA1 recruitment. This chain is RNA-directed RNA polymerase, found in Costelytra zealandica (Greater wax moth).